Consider the following 443-residue polypeptide: Adenylyltransferase and sulfurtransferase UBA4 (443 aa).

Residues glycine 81, aspartate 102, 109 to 113 (SNLHR), lysine 126, and 170 to 171 (DS) contribute to the ATP site. 2 residues coordinate Zn(2+): cysteine 212 and cysteine 215. The active-site Glycyl thioester intermediate; for adenylyltransferase activity is cysteine 229. Zn(2+)-binding residues include cysteine 290 and cysteine 293. The 100-residue stretch at 342 to 441 (KERGFVCLDV…YIDEINPSLP (100 aa)) folds into the Rhodanese domain. Cysteine 400 acts as the Cysteine persulfide intermediate; for sulfurtransferase activity in catalysis.

In the N-terminal section; belongs to the HesA/MoeB/ThiF family. UBA4 subfamily. It depends on Zn(2+) as a cofactor.

The protein resides in the cytoplasm. The protein localises to the cytosol. The protein operates within tRNA modification; 5-methoxycarbonylmethyl-2-thiouridine-tRNA biosynthesis. Its function is as follows. Plays a central role in 2-thiolation of mcm(5)S(2)U at tRNA wobble positions of cytosolic tRNA(Lys), tRNA(Glu) and tRNA(Gln). Acts by mediating the C-terminal thiocarboxylation of sulfur carrier URM1. Its N-terminus first activates URM1 as acyl-adenylate (-COAMP), then the persulfide sulfur on the catalytic cysteine is transferred to URM1 to form thiocarboxylation (-COSH) of its C-terminus. The reaction probably involves hydrogen sulfide that is generated from the persulfide intermediate and that acts as a nucleophile towards URM1. Subsequently, a transient disulfide bond is formed. Does not use thiosulfate as sulfur donor; NFS1 probably acting as a sulfur donor for thiocarboxylation reactions. Prior mcm(5) tRNA modification by the elongator complex is required for 2-thiolation. May also be involved in protein urmylation. The polypeptide is Adenylyltransferase and sulfurtransferase UBA4 (Eremothecium gossypii (strain ATCC 10895 / CBS 109.51 / FGSC 9923 / NRRL Y-1056) (Yeast)).